A 563-amino-acid polypeptide reads, in one-letter code: Arginine--tRNA ligase (563 aa).

The short motif at 121–131 is the 'HIGH' region element; sequence PNIAKPFSIGH.

Belongs to the class-I aminoacyl-tRNA synthetase family. Monomer.

The protein localises to the cytoplasm. The catalysed reaction is tRNA(Arg) + L-arginine + ATP = L-arginyl-tRNA(Arg) + AMP + diphosphate. The sequence is that of Arginine--tRNA ligase from Streptococcus pneumoniae (strain Taiwan19F-14).